We begin with the raw amino-acid sequence, 567 residues long: Oxygen-dependent choline dehydrogenase (567 aa).

6–35 (DYIIVGAGSAGNTLATRLTEDEGVTVLLLE) is an FAD binding site. The disordered stretch occupies residues 182 to 203 (QQEGFGPMDRTVTPKGRRASTA). The Proton acceptor role is filled by His-475.

The protein belongs to the GMC oxidoreductase family. It depends on FAD as a cofactor.

The catalysed reaction is choline + A = betaine aldehyde + AH2. It carries out the reaction betaine aldehyde + NAD(+) + H2O = glycine betaine + NADH + 2 H(+). It participates in amine and polyamine biosynthesis; betaine biosynthesis via choline pathway; betaine aldehyde from choline (cytochrome c reductase route): step 1/1. In terms of biological role, involved in the biosynthesis of the osmoprotectant glycine betaine. Catalyzes the oxidation of choline to betaine aldehyde and betaine aldehyde to glycine betaine at the same rate. The polypeptide is Oxygen-dependent choline dehydrogenase (Pseudomonas fluorescens (strain ATCC BAA-477 / NRRL B-23932 / Pf-5)).